Here is a 208-residue protein sequence, read N- to C-terminus: Uracil phosphoribosyltransferase (208 aa).

Residues Arg-78, Arg-103, and 130–138 (DPMLATGGT) contribute to the 5-phospho-alpha-D-ribose 1-diphosphate site. Uracil contacts are provided by residues Ile-193 and 198–200 (GDA). Position 199 (Asp-199) interacts with 5-phospho-alpha-D-ribose 1-diphosphate.

It belongs to the UPRTase family. Requires Mg(2+) as cofactor.

The catalysed reaction is UMP + diphosphate = 5-phospho-alpha-D-ribose 1-diphosphate + uracil. The protein operates within pyrimidine metabolism; UMP biosynthesis via salvage pathway; UMP from uracil: step 1/1. Allosterically activated by GTP. Functionally, catalyzes the conversion of uracil and 5-phospho-alpha-D-ribose 1-diphosphate (PRPP) to UMP and diphosphate. In Nitratidesulfovibrio vulgaris (strain DSM 19637 / Miyazaki F) (Desulfovibrio vulgaris), this protein is Uracil phosphoribosyltransferase.